A 407-amino-acid polypeptide reads, in one-letter code: Phospholipid-transporting ATPase accessory subunit CDC50 (407 aa).

A disordered region spans residues 1-33 (MAPRRRRGAGQDGSDDGRSDSDAPKNRPPNTAF). Residues 1 to 48 (MAPRRRRGAGQDGSDDGRSDSDAPKNRPPNTAFRQQRMRAWQCVLTPK) are Cytoplasmic-facing. A compositionally biased stretch (basic and acidic residues) spans 15-25 (DDGRSDSDAPK). The helical transmembrane segment at 49–69 (LIVTVFSILAAIYLGFGAWLT) threads the bilayer. The Extracellular portion of the chain corresponds to 70-359 (YLAHTVRDLK…TMGSRNIWPG (290 aa)). An intrachain disulfide couples cysteine 85 to cysteine 139. N-linked (GlcNAc...) asparagine glycans are attached at residues asparagine 131 and asparagine 189. Cysteine 193 and cysteine 210 form a disulfide bridge. Residues asparagine 219, asparagine 232, asparagine 241, and asparagine 314 are each glycosylated (N-linked (GlcNAc...) asparagine). A helical membrane pass occupies residues 360 to 380 (IIFLIVGGICLVLDIYFILSF). The Cytoplasmic portion of the chain corresponds to 381 to 407 (FIWRPRKLGDPSYLSWNQPSAPGGHSS).

The protein belongs to the CDC50/LEM3 family. Component of a flippase complex consisting of DNF1 and CDC50. Interacts with DNF1; the interaction is direct.

The protein localises to the cell membrane. Functionally, accessory component of a P4-ATPase flippase complex which catalyzes the hydrolysis of ATP coupled to the transport of phosphatidylcholine and phosphatidylserine from the lumen to the cytosolic leaflet of membranes and ensures the maintenance of asymmetric distribution of phospholipids. The protein is Phospholipid-transporting ATPase accessory subunit CDC50 of Chaetomium thermophilum (strain DSM 1495 / CBS 144.50 / IMI 039719) (Thermochaetoides thermophila).